A 241-amino-acid chain; its full sequence is CD99 antigen-like protein 2 (241 aa).

An N-terminal signal peptide occupies residues 1 to 23; sequence MAKWGSPFVFALACLALSWRVYG. The Extracellular segment spans residues 24-173; the sequence is DDFDLYDALG…TGFGSQAETG (150 aa). Positions 30–168 are disordered; it reads DALGDPTEKP…NDGSDTGFGS (139 aa). The segment covering 143 to 154 has biased composition (gly residues); sequence GGGGGGGGGRAT. The helical transmembrane segment at 174–196 threads the bilayer; sequence TIAGIASALAMALIGAVSSYISY. The Cytoplasmic portion of the chain corresponds to 197–241; that stretch reads QQKKFCFSIQEGLNAEYVKGEHMEAVVSEEPQVKYSVVESQSAIP.

Belongs to the CD99 family.

Its subcellular location is the cell membrane. It is found in the cell junction. Functionally, may function as a homophilic adhesion molecule. The chain is CD99 antigen-like protein 2 (cd99l2) from Xenopus tropicalis (Western clawed frog).